We begin with the raw amino-acid sequence, 50 residues long: Peroxiredoxin-6 (50 aa).

The Thioredoxin domain maps to 1–50 (DFTPVCTTELGRLAPEFAKRVVFIFGPDKKLKLSILYPATTGRNFDEILR). The residue at position 3 (Thr-3) is a Phosphothreonine. Cys-6 (cysteine sulfenic acid (-SOH) intermediate; for peroxidase activity) is an active-site residue. At Lys-19 the chain carries N6-acetyllysine. The For phospholipase activity role is filled by Asp-28.

Belongs to the peroxiredoxin family. Prx6 subfamily. Homodimer. Interacts with GSTP1; mediates PRDX6 glutathionylation and regeneration. Interacts with APEX1. Interacts with STH. May interact with FAM168B. May interact with HTR2A. Post-translationally, irreversibly inactivated by overoxidation of Cys-6 to sulfinic acid (Cys-SO(2)H) and sulfonic acid (Cys-SO(3)H) forms upon oxidative stress. Phosphorylation at Thr-177 by MAP kinases increases the phospholipase activity of the enzyme. The phosphorylated form exhibits a greater lysophosphatidylcholine acyltransferase activity compared to the non-phosphorylated form.

It is found in the cytoplasm. The protein resides in the lysosome. It catalyses the reaction a hydroperoxide + 2 glutathione = an alcohol + glutathione disulfide + H2O. It carries out the reaction a 1,2-diacyl-sn-glycero-3-phosphocholine + H2O = a 1-acyl-sn-glycero-3-phosphocholine + a fatty acid + H(+). The enzyme catalyses a 1-acyl-sn-glycero-3-phosphocholine + an acyl-CoA = a 1,2-diacyl-sn-glycero-3-phosphocholine + CoA. The catalysed reaction is 1-hexadecanoyl-sn-glycero-3-phosphocholine + hexadecanoyl-CoA = 1,2-dihexadecanoyl-sn-glycero-3-phosphocholine + CoA. It catalyses the reaction 1,2-dihexadecanoyl-sn-glycero-3-phosphocholine + H2O = 1-hexadecanoyl-sn-glycero-3-phosphocholine + hexadecanoate + H(+). Thiol-specific peroxidase that catalyzes the reduction of hydrogen peroxide and organic hydroperoxides to water and alcohols, respectively. Can reduce H(2)O(2) and short chain organic, fatty acid, and phospholipid hydroperoxides. Also has phospholipase activity, and can therefore either reduce the oxidized sn-2 fatty acyl group of phospholipids (peroxidase activity) or hydrolyze the sn-2 ester bond of phospholipids (phospholipase activity). These activities are dependent on binding to phospholipids at acidic pH and to oxidized phospholipds at cytosolic pH. Plays a role in cell protection against oxidative stress by detoxifying peroxides and in phospholipid homeostasis. Exhibits acyl-CoA-dependent lysophospholipid acyltransferase which mediates the conversion of lysophosphatidylcholine (1-acyl-sn-glycero-3-phosphocholine or LPC) into phosphatidylcholine (1,2-diacyl-sn-glycero-3-phosphocholine or PC). Shows a clear preference for LPC as the lysophospholipid and for palmitoyl CoA as the fatty acyl substrate. The sequence is that of Peroxiredoxin-6 from Mesocricetus auratus (Golden hamster).